The primary structure comprises 184 residues: Protein YrdA (184 aa).

This sequence belongs to the gamma-class carbonic anhydrase family.

This is Protein YrdA (yrdA) from Escherichia coli (strain K12).